Reading from the N-terminus, the 1064-residue chain is Alpha-aminoadipic semialdehyde synthase (1064 aa).

The lysine-ketoglutarate reductase stretch occupies residues 24–445 (VNKWERRTPL…RACISYRGEL (422 aa)). Phosphothreonine is present on Thr-238. At Ser-458 the chain carries Phosphoserine. The tract at residues 583–1064 (MTKKSGVLIL…YGIKLMEKAE (482 aa)) is saccharopine dehydrogenase. Residues 703 to 704 (SY), Asp-730, Arg-830, and 852 to 854 (TLR) contribute to the L-saccharopine site. NADP(+) is bound at residue 729 to 731 (LDP).

It in the N-terminal section; belongs to the AlaDH/PNT family. This sequence in the C-terminal section; belongs to the saccharopine dehydrogenase family. In terms of assembly, homodimer. Phosphorylation of Ser-458 seems important for the LKR activity. In terms of tissue distribution, ubiquitous, with higher levels in flowers. Isoform Long is mostly present in young leaves, cotyledons, root tips and mature root parts. Whereas isoform Short is mostly expressed in cotyledons and at low levels in all root parts.

It is found in the cytoplasm. The enzyme catalyses L-saccharopine + NADP(+) + H2O = L-lysine + 2-oxoglutarate + NADPH + H(+). It carries out the reaction L-saccharopine + NAD(+) + H2O = (S)-2-amino-6-oxohexanoate + L-glutamate + NADH + H(+). It participates in amino-acid degradation; L-lysine degradation via saccharopine pathway; glutaryl-CoA from L-lysine: step 1/6. Its pathway is amino-acid degradation; L-lysine degradation via saccharopine pathway; glutaryl-CoA from L-lysine: step 2/6. The LKR activity is stimulated by NaCl. Its function is as follows. Bifunctional enzyme that catalyzes the first two steps in lysine degradation. The N-terminal and the C-terminal contain lysine-oxoglutarate reductase and saccharopine dehydrogenase activity, respectively. Negatively regulates free Lys accumulation in seeds. The chain is Alpha-aminoadipic semialdehyde synthase (LKR/SDH) from Arabidopsis thaliana (Mouse-ear cress).